An 87-amino-acid chain; its full sequence is Phosphoribosyl-ATP pyrophosphatase (87 aa).

It belongs to the PRA-PH family.

It localises to the cytoplasm. The catalysed reaction is 1-(5-phospho-beta-D-ribosyl)-ATP + H2O = 1-(5-phospho-beta-D-ribosyl)-5'-AMP + diphosphate + H(+). The protein operates within amino-acid biosynthesis; L-histidine biosynthesis; L-histidine from 5-phospho-alpha-D-ribose 1-diphosphate: step 2/9. This Bifidobacterium adolescentis (strain ATCC 15703 / DSM 20083 / NCTC 11814 / E194a) protein is Phosphoribosyl-ATP pyrophosphatase.